A 781-amino-acid chain; its full sequence is DEAD-box ATP-dependent RNA helicase 50 (781 aa).

Disordered stretches follow at residues 72-103, 117-148, 166-240, 254-292, and 313-342; these read EFAP…LTAS, GKVT…DEGF, IPRS…KGDR, GRAI…REDR, and YNPR…RGWG. The span at 79-88 shows a compositional bias: low complexity; sequence SDLLSSIPSE. A compositionally biased stretch (acidic residues) spans 130 to 143; sequence EEEDEDDASDENYS. Residues 171-197 show a composition bias toward basic and acidic residues; the sequence is KSAERNEVKRASKVRESRESRRDLDRL. Residues 198 to 208 are compositionally biased toward acidic residues; that stretch reads EGDDEDVDEVS. The span at 216 to 226 shows a compositional bias: polar residues; it reads NQRAGSRSSYS. The span at 254 to 274 shows a compositional bias: basic and acidic residues; that stretch reads GRAIDEVSNPRKFNDNERAES. A compositionally biased stretch (low complexity) spans 275 to 286; sequence RSSYSRDSSANS. The segment covering 313 to 325 has biased composition (basic and acidic residues); the sequence is YNPRRFTDNERGL. The Q motif signature appears at 374–402; it reads KTFAEIGCSEDMMKALKEQNFDRPAHIQA. A Helicase ATP-binding domain is found at 405 to 586; sequence FSPVIDGKSC…VEVFPDCEVV (182 aa). Residue 418–425 coordinates ATP; the sequence is DQSGSGKT. Residues 533 to 536 carry the DEAD box motif; the sequence is DEVD. One can recognise a Helicase C-terminal domain in the interval 621 to 781; it reads NKKTALLQIM…DVPNAYEFTT (161 aa).

Belongs to the DEAD box helicase family.

It catalyses the reaction ATP + H2O = ADP + phosphate + H(+). Probably involved in resistance to biotic and abiotic stresses. This chain is DEAD-box ATP-dependent RNA helicase 50 (RH50), found in Arabidopsis thaliana (Mouse-ear cress).